We begin with the raw amino-acid sequence, 156 residues long: MAVLEIIKHPNEVLETPCERVINFDKKLVKLLKDMHETMLIADGVGLAAPQVGVSLQVAVVDVDDDTGKIELINPSILEKRGEQVGPEGCLSFPGLYGEVERADYIKVRAQNRRGKVFLLEAEGFLARAIQHEIDHLHGVLFTSKVTRYYEENELE.

The Fe cation site is built by cysteine 90 and histidine 132. Glutamate 133 is an active-site residue. Histidine 136 lines the Fe cation pocket.

The protein belongs to the polypeptide deformylase family. Fe(2+) is required as a cofactor.

The catalysed reaction is N-terminal N-formyl-L-methionyl-[peptide] + H2O = N-terminal L-methionyl-[peptide] + formate. Removes the formyl group from the N-terminal Met of newly synthesized proteins. Requires at least a dipeptide for an efficient rate of reaction. N-terminal L-methionine is a prerequisite for activity but the enzyme has broad specificity at other positions. The chain is Peptide deformylase 1 from Bacillus cereus (strain ATCC 14579 / DSM 31 / CCUG 7414 / JCM 2152 / NBRC 15305 / NCIMB 9373 / NCTC 2599 / NRRL B-3711).